We begin with the raw amino-acid sequence, 534 residues long: Thromboxane-A synthase (534 aa).

At 1–10 (MEVLGFLSPE) the chain is on the cytoplasmic side. The helical transmembrane segment at 11-31 (LNGPMVTMALAVVLLALLKWY) threads the bilayer. At 32–75 (STSAFSRLEKLGIRHPKPSPFIGNLTFFRQGFWESHMELRKQYG) the chain is on the lumenal side. A helical membrane pass occupies residues 76–96 (PLSGYYLGRRMIVVISDPDMI). At 97 to 223 (KQVLAEKFSN…RRFFAFSVPR (127 aa)) the chain is on the cytoplasmic side. Residues 224–244 (LILVLILSFPSIMVPLARILP) traverse the membrane as a helical segment. Over 245-336 (NKKRDEVNGF…LTVDEVVGQA (92 aa)) the chain is Lumenal. The chain crosses the membrane as a helical span at residues 337–357 (FLFLIAGYEIITNTLSFVTYL). Residues 358 to 534 (LATNPDCQEK…NGVYIRIVPR (177 aa)) are Cytoplasmic-facing. C480 is a heme binding site.

The protein belongs to the cytochrome P450 family. Monomer. The cofactor is heme. In terms of tissue distribution, expressed in lung, kidney and thymus.

Its subcellular location is the endoplasmic reticulum membrane. It carries out the reaction prostaglandin H2 = thromboxane A2. It catalyses the reaction prostaglandin H2 = (12S)-hydroxy-(5Z,8E,10E)-heptadecatrienoate + malonaldehyde. The enzyme catalyses a hydroperoxyeicosatetraenoate = an oxoeicosatetraenoate + H2O. The catalysed reaction is (15S)-hydroperoxy-(5Z,8Z,11Z,13E)-eicosatetraenoate = 15-oxo-(5Z,8Z,11Z,13E)-eicosatetraenoate + H2O. It carries out the reaction (15S)-hydroperoxy-(5Z,8Z,11Z,13E)-eicosatetraenoate + AH2 = (15S)-hydroxy-(5Z,8Z,11Z,13E)-eicosatetraenoate + A + H2O. In terms of biological role, catalyzes the conversion of prostaglandin H2 (PGH2) to thromboxane A2 (TXA2), a potent inducer of blood vessel constriction and platelet aggregation. Also cleaves PGH2 to 12-hydroxy-heptadecatrienoicacid (12-HHT) and malondialdehyde, which is known to act as a mediator of DNA damage. 12-HHT and malondialdehyde are formed stoichiometrically in the same amounts as TXA2. Additionally, displays dehydratase activity, toward (15S)-hydroperoxy-(5Z,8Z,11Z,13E)-eicosatetraenoate (15(S)-HPETE) producing 15-KETE and 15-HETE. In Sus scrofa (Pig), this protein is Thromboxane-A synthase (TBXAS1).